The chain runs to 99 residues: MDILFSLFISMAMFTFGIIGILIKRNALIVFMCVELMLNAANLLFVAFAAHWGNETGLIWVFFVLVVAAAEAAVGLAIIINMFRSKQVVDVDQYNLLRG.

3 helical membrane-spanning segments follow: residues 3-23 (ILFS…GILI), 28-48 (LIVF…FVAF), and 59-79 (IWVF…LAII).

Belongs to the complex I subunit 4L family. As to quaternary structure, NDH-1 is composed of 14 different subunits. Subunits NuoA, H, J, K, L, M, N constitute the membrane sector of the complex.

It localises to the cell inner membrane. It carries out the reaction a quinone + NADH + 5 H(+)(in) = a quinol + NAD(+) + 4 H(+)(out). In terms of biological role, NDH-1 shuttles electrons from NADH, via FMN and iron-sulfur (Fe-S) centers, to quinones in the respiratory chain. The immediate electron acceptor for the enzyme in this species is believed to be ubiquinone. Couples the redox reaction to proton translocation (for every two electrons transferred, four hydrogen ions are translocated across the cytoplasmic membrane), and thus conserves the redox energy in a proton gradient. The chain is NADH-quinone oxidoreductase subunit K from Protochlamydia amoebophila (strain UWE25).